The following is a 163-amino-acid chain: Acetolactate synthase isozyme 3 small subunit (163 aa).

The ACT domain maps to 4-78; it reads ILSVLLENES…DVLRVSELGQ (75 aa).

It belongs to the acetolactate synthase small subunit family. In terms of assembly, dimer of large and small chains.

It catalyses the reaction 2 pyruvate + H(+) = (2S)-2-acetolactate + CO2. It participates in amino-acid biosynthesis; L-isoleucine biosynthesis; L-isoleucine from 2-oxobutanoate: step 1/4. It functions in the pathway amino-acid biosynthesis; L-valine biosynthesis; L-valine from pyruvate: step 1/4. With respect to regulation, sensitive to valine inhibition. This is Acetolactate synthase isozyme 3 small subunit (ilvH) from Salmonella typhimurium (strain LT2 / SGSC1412 / ATCC 700720).